Consider the following 174-residue polypeptide: RNA pyrophosphohydrolase (174 aa).

The region spanning 6 to 149 (GYRPNVGIIL…KRDVYLEALK (144 aa)) is the Nudix hydrolase domain. Residues 38–59 (GGIKPGESPETAMYRELYEEVG) carry the Nudix box motif.

The protein belongs to the Nudix hydrolase family. RppH subfamily. It depends on a divalent metal cation as a cofactor.

Accelerates the degradation of transcripts by removing pyrophosphate from the 5'-end of triphosphorylated RNA, leading to a more labile monophosphorylated state that can stimulate subsequent ribonuclease cleavage. This Neisseria gonorrhoeae (strain ATCC 700825 / FA 1090) protein is RNA pyrophosphohydrolase.